The primary structure comprises 126 residues: Translation initiation factor 5A (126 aa).

K36 is modified (hypusine).

It belongs to the eIF-5A family.

Its subcellular location is the cytoplasm. Functions by promoting the formation of the first peptide bond. This chain is Translation initiation factor 5A, found in Haloarcula marismortui (strain ATCC 43049 / DSM 3752 / JCM 8966 / VKM B-1809) (Halobacterium marismortui).